Consider the following 808-residue polypeptide: Phospholipase D alpha 1 (808 aa).

Residues 1 to 125 (MAKTLLHGTL…LEGEEVDKWV (125 aa)) form the C2 domain. D186 is a binding site for Ca(2+). In terms of domain architecture, PLD phosphodiesterase 1 spans 326–364 (TIFTHHQKIVVVDSEMPTSGSENRRVVSFVGGIDLCDGR). Catalysis depends on residues H331, K333, and D338. H331 contributes to the a 1,2-diacyl-sn-glycero-3-phosphate binding site. 2 residues coordinate Ca(2+): H370 and H404. Positions 654-681 (FMIYVHAKMMIVDDEYIIIGSANINQRS) constitute a PLD phosphodiesterase 2 domain. Residues H659, K661, and D666 contribute to the active site. H659 provides a ligand contact to a 1,2-diacyl-sn-glycero-3-phosphate. A Ca(2+)-binding site is contributed by E720.

Belongs to the phospholipase D family. C2-PLD subfamily. Requires Ca(2+) as cofactor.

The enzyme catalyses a 1,2-diacyl-sn-glycero-3-phosphocholine + H2O = a 1,2-diacyl-sn-glycero-3-phosphate + choline + H(+). In terms of biological role, hydrolyzes glycerol-phospholipids at the terminal phosphodiesteric bond. Plays an important role in various cellular processes. In Spuriopimpinella brachycarpa (Chamnamul), this protein is Phospholipase D alpha 1 (PLD1).